A 1373-amino-acid chain; its full sequence is DNA-directed RNA polymerase subunit beta (1373 aa).

It belongs to the RNA polymerase beta chain family. As to quaternary structure, the RNAP catalytic core consists of 2 alpha, 1 beta, 1 beta' and 1 omega subunit. When a sigma factor is associated with the core the holoenzyme is formed, which can initiate transcription.

It catalyses the reaction RNA(n) + a ribonucleoside 5'-triphosphate = RNA(n+1) + diphosphate. Functionally, DNA-dependent RNA polymerase catalyzes the transcription of DNA into RNA using the four ribonucleoside triphosphates as substrates. The chain is DNA-directed RNA polymerase subunit beta from Lawsonia intracellularis (strain PHE/MN1-00).